The following is a 278-amino-acid chain: Inositol oxygenase (278 aa).

Substrate-binding positions include Arg22 and Asp78–Ser80. Fe cation contacts are provided by His91, His116, and Asp117. Residues Lys120 and Gly134–Asp135 contribute to the substrate site. Fe cation contacts are provided by His187, His213, and Asp246. His213–Ser214 is a binding site for substrate.

Belongs to the myo-inositol oxygenase family. The cofactor is Fe cation.

It is found in the cytoplasm. The enzyme catalyses myo-inositol + O2 = D-glucuronate + H2O + H(+). The protein operates within polyol metabolism; myo-inositol degradation into D-glucuronate; D-glucuronate from myo-inositol: step 1/1. This Danio rerio (Zebrafish) protein is Inositol oxygenase (miox).